A 103-amino-acid chain; its full sequence is Co-chaperonin GroES (103 aa).

Belongs to the GroES chaperonin family. Heptamer of 7 subunits arranged in a ring. Interacts with the chaperonin GroEL.

Its subcellular location is the cytoplasm. Functionally, together with the chaperonin GroEL, plays an essential role in assisting protein folding. The GroEL-GroES system forms a nano-cage that allows encapsulation of the non-native substrate proteins and provides a physical environment optimized to promote and accelerate protein folding. GroES binds to the apical surface of the GroEL ring, thereby capping the opening of the GroEL channel. This Parasynechococcus marenigrum (strain WH8102) protein is Co-chaperonin GroES.